Here is a 104-residue protein sequence, read N- to C-terminus: MIRKAFVMQVNPDAHEEYQRRHNHIWPELEAVLKAHGAHHYAIYLDKERHLLFATVEIESEARWEAVASTEVCQRWWKYMREVMPSNPDNSPLSAELKEVFYLA.

Tyr18 serves as a coordination point for substrate. His22 functions as the Proton donor in the catalytic mechanism. Residues Tyr41 and 76–77 (WW) contribute to the substrate site.

Belongs to the rhamnose mutarotase family. In terms of assembly, homodimer.

The protein localises to the cytoplasm. It catalyses the reaction alpha-L-rhamnose = beta-L-rhamnose. It participates in carbohydrate metabolism; L-rhamnose metabolism. In terms of biological role, involved in the anomeric conversion of L-rhamnose. The polypeptide is L-rhamnose mutarotase (Klebsiella pneumoniae subsp. pneumoniae (strain ATCC 700721 / MGH 78578)).